The chain runs to 204 residues: Thiamine-phosphate synthase (204 aa).

4-amino-2-methyl-5-(diphosphooxymethyl)pyrimidine contacts are provided by residues 37–41 (QVREK) and N69. D70 and D89 together coordinate Mg(2+). S108 lines the 4-amino-2-methyl-5-(diphosphooxymethyl)pyrimidine pocket. 134-136 (TGT) serves as a coordination point for 2-[(2R,5Z)-2-carboxy-4-methylthiazol-5(2H)-ylidene]ethyl phosphate. K137 serves as a coordination point for 4-amino-2-methyl-5-(diphosphooxymethyl)pyrimidine. 2-[(2R,5Z)-2-carboxy-4-methylthiazol-5(2H)-ylidene]ethyl phosphate contacts are provided by residues G165 and 185 to 186 (IS).

The protein belongs to the thiamine-phosphate synthase family. Mg(2+) is required as a cofactor.

The catalysed reaction is 2-[(2R,5Z)-2-carboxy-4-methylthiazol-5(2H)-ylidene]ethyl phosphate + 4-amino-2-methyl-5-(diphosphooxymethyl)pyrimidine + 2 H(+) = thiamine phosphate + CO2 + diphosphate. It catalyses the reaction 2-(2-carboxy-4-methylthiazol-5-yl)ethyl phosphate + 4-amino-2-methyl-5-(diphosphooxymethyl)pyrimidine + 2 H(+) = thiamine phosphate + CO2 + diphosphate. It carries out the reaction 4-methyl-5-(2-phosphooxyethyl)-thiazole + 4-amino-2-methyl-5-(diphosphooxymethyl)pyrimidine + H(+) = thiamine phosphate + diphosphate. It functions in the pathway cofactor biosynthesis; thiamine diphosphate biosynthesis; thiamine phosphate from 4-amino-2-methyl-5-diphosphomethylpyrimidine and 4-methyl-5-(2-phosphoethyl)-thiazole: step 1/1. Condenses 4-methyl-5-(beta-hydroxyethyl)thiazole monophosphate (THZ-P) and 2-methyl-4-amino-5-hydroxymethyl pyrimidine pyrophosphate (HMP-PP) to form thiamine monophosphate (TMP). In Clostridium novyi (strain NT), this protein is Thiamine-phosphate synthase.